We begin with the raw amino-acid sequence, 381 residues long: Chorismate synthase (381 aa).

Positions 39 and 45 each coordinate NADP(+). Residues 127 to 129 (RAS), 248 to 249 (QS), Gly-293, 308 to 312 (KPIPT), and Arg-334 contribute to the FMN site.

This sequence belongs to the chorismate synthase family. Homotetramer. It depends on FMNH2 as a cofactor.

The enzyme catalyses 5-O-(1-carboxyvinyl)-3-phosphoshikimate = chorismate + phosphate. The protein operates within metabolic intermediate biosynthesis; chorismate biosynthesis; chorismate from D-erythrose 4-phosphate and phosphoenolpyruvate: step 7/7. Functionally, catalyzes the anti-1,4-elimination of the C-3 phosphate and the C-6 proR hydrogen from 5-enolpyruvylshikimate-3-phosphate (EPSP) to yield chorismate, which is the branch point compound that serves as the starting substrate for the three terminal pathways of aromatic amino acid biosynthesis. This reaction introduces a second double bond into the aromatic ring system. The protein is Chorismate synthase of Caldicellulosiruptor saccharolyticus (strain ATCC 43494 / DSM 8903 / Tp8T 6331).